We begin with the raw amino-acid sequence, 392 residues long: Phosphoglycerate kinase (392 aa).

Substrate-binding positions include 21 to 23 (DFN), R36, 59 to 62 (HLGR), R113, and R146. Residues K197, E319, and 345–348 (GGDT) contribute to the ATP site.

This sequence belongs to the phosphoglycerate kinase family. As to quaternary structure, monomer.

It localises to the cytoplasm. The enzyme catalyses (2R)-3-phosphoglycerate + ATP = (2R)-3-phospho-glyceroyl phosphate + ADP. The protein operates within carbohydrate degradation; glycolysis; pyruvate from D-glyceraldehyde 3-phosphate: step 2/5. The chain is Phosphoglycerate kinase from Francisella tularensis subsp. tularensis (strain FSC 198).